We begin with the raw amino-acid sequence, 247 residues long: Cell division protein ZapD (247 aa).

The protein belongs to the ZapD family. In terms of assembly, interacts with FtsZ.

It localises to the cytoplasm. Functionally, cell division factor that enhances FtsZ-ring assembly. Directly interacts with FtsZ and promotes bundling of FtsZ protofilaments, with a reduction in FtsZ GTPase activity. The polypeptide is Cell division protein ZapD (Klebsiella pneumoniae (strain 342)).